Reading from the N-terminus, the 196-residue chain is NADH-quinone oxidoreductase subunit B (196 aa).

[4Fe-4S] cluster-binding residues include cysteine 63, cysteine 64, cysteine 129, and cysteine 159.

It belongs to the complex I 20 kDa subunit family. As to quaternary structure, NDH-1 is composed of 14 different subunits. Subunits NuoB, C, D, E, F, and G constitute the peripheral sector of the complex. The cofactor is [4Fe-4S] cluster.

Its subcellular location is the cell inner membrane. It carries out the reaction a quinone + NADH + 5 H(+)(in) = a quinol + NAD(+) + 4 H(+)(out). Functionally, NDH-1 shuttles electrons from NADH, via FMN and iron-sulfur (Fe-S) centers, to quinones in the respiratory chain. The immediate electron acceptor for the enzyme in this species is believed to be a menaquinone. Couples the redox reaction to proton translocation (for every two electrons transferred, four hydrogen ions are translocated across the cytoplasmic membrane), and thus conserves the redox energy in a proton gradient. This chain is NADH-quinone oxidoreductase subunit B, found in Bacteroides fragilis (strain ATCC 25285 / DSM 2151 / CCUG 4856 / JCM 11019 / LMG 10263 / NCTC 9343 / Onslow / VPI 2553 / EN-2).